The following is a 215-amino-acid chain: Cytochrome b6 (215 aa).

Over methionine 1–asparagine 31 the chain is Cytoplasmic. Residues isoleucine 32–phenylalanine 52 form a helical membrane-spanning segment. Cysteine 35 provides a ligand contact to heme c. Topologically, residues alanine 53–serine 89 are lumenal, thylakoid. 4 residues coordinate heme b: arginine 83, histidine 86, histidine 100, and arginine 103. The chain crosses the membrane as a helical span at residues alanine 90 to phenylalanine 110. Residues lysine 111–glutamate 115 are Cytoplasmic-facing. Residues leucine 116 to tyrosine 136 traverse the membrane as a helical segment. Over serine 137–serine 185 the chain is Lumenal, thylakoid. A helical membrane pass occupies residues alanine 186–isoleucine 206. Histidine 187 and histidine 202 together coordinate heme b. The Cytoplasmic segment spans residues arginine 207–leucine 215. Lysine 208 contributes to the heme c binding site.

The protein belongs to the cytochrome b family. PetB subfamily. As to quaternary structure, the 4 large subunits of the cytochrome b6-f complex are cytochrome b6, subunit IV (17 kDa polypeptide, PetD), cytochrome f and the Rieske protein, while the 4 small subunits are PetG, PetL, PetM and PetN. The complex functions as a dimer. Requires heme b as cofactor. The cofactor is heme c.

The protein resides in the cellular thylakoid membrane. In terms of biological role, component of the cytochrome b6-f complex, which mediates electron transfer between photosystem II (PSII) and photosystem I (PSI), cyclic electron flow around PSI, and state transitions. This chain is Cytochrome b6, found in Mastigocladus laminosus (Fischerella sp.).